Consider the following 908-residue polypeptide: PTS system glucose-specific EIICBA component (908 aa).

Positions 1–264 (MQISLVKIRN…YAPLWYTSAG (264 aa)) constitute a PTS EIIC type-1; first part domain. The next 5 helical transmembrane spans lie at 31 to 51 (LMIP…GDAI), 71 to 91 (GGNV…AITF), 100 to 120 (FSAF…IIPV), 155 to 175 (VFGG…FYAI), and 189 to 209 (FVPI…LMVW). Residues 265–450 (GSLQEIANQQ…VSQFTVAVPS (186 aa)) form a unknown region. Residues 451–602 (LNPAQYSQGK…FNLATPGRGG (152 aa)) form the PTS EIIC type-1; second part domain. The next 5 membrane-spanning stretches (helical) occupy residues 459–479 (GKFP…ILAA), 487–507 (ASSI…TEPF), 509–529 (FTFL…LAAV), 536–556 (LLSA…ILYG), and 571–591 (VPII…FLTI). The PTS EIIB type-1 domain maps to 631 to 713 (QIEAGMLLRA…QDIIQGKVNW (83 aa)). The active-site Phosphocysteine intermediate; for EIIB activity is the Cys-653. In terms of domain architecture, PTS EIIA type-1 spans 762–875 (DDTFKNRLVG…DPITPFIVMQ (114 aa)). Residue His-815 is the Tele-phosphohistidine intermediate; for EIIA activity of the active site.

The protein localises to the cell membrane. The enzyme catalyses N(pros)-phospho-L-histidyl-[protein] + D-glucose(out) = D-glucose 6-phosphate(in) + L-histidyl-[protein]. Its function is as follows. The phosphoenolpyruvate-dependent sugar phosphotransferase system (sugar PTS), a major carbohydrate active transport system, catalyzes the phosphorylation of incoming sugar substrates concomitantly with their translocation across the cell membrane. This system is involved in glucose transport. In Mycoplasma genitalium (strain ATCC 33530 / DSM 19775 / NCTC 10195 / G37) (Mycoplasmoides genitalium), this protein is PTS system glucose-specific EIICBA component (ptsG).